The chain runs to 251 residues: Coproheme decarboxylase (251 aa).

Residues Arg-133, 147-151 (YPMSK), His-174, Gln-187, and Ser-225 each bind Fe-coproporphyrin III. Tyr-147 is an active-site residue.

It belongs to the ChdC family. Type 1 subfamily. Fe-coproporphyrin III is required as a cofactor.

It carries out the reaction Fe-coproporphyrin III + 2 H2O2 + 2 H(+) = heme b + 2 CO2 + 4 H2O. The enzyme catalyses Fe-coproporphyrin III + H2O2 + H(+) = harderoheme III + CO2 + 2 H2O. The catalysed reaction is harderoheme III + H2O2 + H(+) = heme b + CO2 + 2 H2O. It functions in the pathway porphyrin-containing compound metabolism; protoheme biosynthesis. Functionally, involved in coproporphyrin-dependent heme b biosynthesis. Catalyzes the decarboxylation of Fe-coproporphyrin III (coproheme) to heme b (protoheme IX), the last step of the pathway. The reaction occurs in a stepwise manner with a three-propionate intermediate. The polypeptide is Coproheme decarboxylase (Listeria innocua serovar 6a (strain ATCC BAA-680 / CLIP 11262)).